The primary structure comprises 287 residues: Efem/EfeO family lipoprotein (287 aa).

An N-terminal signal peptide occupies residues 1-17 (MKKLPTILLASSLLLAA). A lipid anchor (N-palmitoyl cysteine) is attached at cysteine 18. Cysteine 18 carries S-diacylglycerol cysteine lipidation. The tract at residues 20-50 (NNSHSDDNSNKDKQSQSSKGENKASLQKATK) is disordered. The segment covering 23-33 (HSDDNSNKDKQ) has biased composition (basic and acidic residues).

This sequence belongs to the EfeM/EfeO family.

It localises to the cell membrane. The chain is Efem/EfeO family lipoprotein from Staphylococcus haemolyticus (strain JCSC1435).